The chain runs to 252 residues: Small ribosomal subunit protein eS1A (252 aa).

An N-acetylalanine; partial modification is found at Ala2.

It belongs to the eukaryotic ribosomal protein eS1 family. Component of the small ribosomal subunit (SSU). Mature yeast ribosomes consist of a small (40S) and a large (60S) subunit. The 40S small subunit contains 1 molecule of ribosomal RNA (18S rRNA) and at least 33 different proteins. The large 60S subunit contains 3 rRNA molecules (25S, 5.8S and 5S rRNA) and at least 46 different proteins. eS1 interacts directly with uS11 and eS26, which form part of the mRNA exit tunnel.

It localises to the cytoplasm. Component of the ribosome, a large ribonucleoprotein complex responsible for the synthesis of proteins in the cell. The small ribosomal subunit (SSU) binds messenger RNAs (mRNAs) and translates the encoded message by selecting cognate aminoacyl-transfer RNA (tRNA) molecules. The large subunit (LSU) contains the ribosomal catalytic site termed the peptidyl transferase center (PTC), which catalyzes the formation of peptide bonds, thereby polymerizing the amino acids delivered by tRNAs into a polypeptide chain. The nascent polypeptides leave the ribosome through a tunnel in the LSU and interact with protein factors that function in enzymatic processing, targeting, and the membrane insertion of nascent chains at the exit of the ribosomal tunnel. This chain is Small ribosomal subunit protein eS1A (rps101), found in Schizosaccharomyces pombe (strain 972 / ATCC 24843) (Fission yeast).